Consider the following 352-residue polypeptide: Thiamine-monophosphate kinase (352 aa).

Residues aspartate 58, threonine 73, and aspartate 75 each coordinate Mg(2+). Substrate is bound at residue histidine 82. Mg(2+) contacts are provided by aspartate 103 and aspartate 151. ATP-binding positions include 150-151 (GD) and arginine 177. Aspartate 239 contributes to the Mg(2+) binding site. Serine 241 is a binding site for ATP. Aspartate 242 is a binding site for Mg(2+). Residues aspartate 294 and tryptophan 349 each contribute to the substrate site.

It belongs to the thiamine-monophosphate kinase family.

The enzyme catalyses thiamine phosphate + ATP = thiamine diphosphate + ADP. The protein operates within cofactor biosynthesis; thiamine diphosphate biosynthesis; thiamine diphosphate from thiamine phosphate: step 1/1. Its function is as follows. Catalyzes the ATP-dependent phosphorylation of thiamine-monophosphate (TMP) to form thiamine-pyrophosphate (TPP), the active form of vitamin B1. This Caulobacter vibrioides (strain ATCC 19089 / CIP 103742 / CB 15) (Caulobacter crescentus) protein is Thiamine-monophosphate kinase.